Reading from the N-terminus, the 384-residue chain is MPIRKSNTYLSLVNSYLIDSPQPSSINYWWNVGSLLGLCLVIQIASGIFLAMHYSSNIELAFNSVEHIMRDVNAGWLIRYIHANGASFFFICMYLHIGKALYYGSYKSPRVMLWVIGVIIFVVTMATAFMGYCLVYGQMSHWGATVITNLLSAIPFIGKDIVPFIWGGFSVSNPTIQRFFALHFLLPFILAALVCMHLMALHVNGSSNPLGITGNVDRLPMHPYFIFKDLVTVFVFLLVFSLFVFYSPNTLGHPDNYIPGNPLVTPPSIVPEWYLLPFYAILRSIPDKLGGVIAMFGAILILLTLPYTDRSFIRGNSFKVLSKFMFFLFLFNFILLGNLGQLHVEVPYIELGQYATAFYFAYYLLIVPAISSAENILYYIGTKK.

The next 4 helical transmembrane spans lie at 32–52, 76–98, 113–133, and 179–199; these read VGSL…FLAM, WLIR…LHIG, LWVI…MGYC, and FFAL…MHLM. Residues H82 and H96 each contribute to the heme b site. Residues H183 and H197 each contribute to the heme b site. Residue H202 coordinates a ubiquinone. A run of 4 helical transmembrane segments spans residues 225-245, 289-309, 321-341, and 348-368; these read FIFK…LFVF, LGGV…PYTD, LSKF…NLGQ, and YIEL…LIVP.

The protein belongs to the cytochrome b family. Fungal cytochrome b-c1 complex contains 10 subunits; 3 respiratory subunits, 2 core proteins and 5 low-molecular weight proteins. Cytochrome b-c1 complex is a homodimer. Requires heme b as cofactor.

It localises to the mitochondrion inner membrane. In terms of biological role, component of the ubiquinol-cytochrome c reductase complex (complex III or cytochrome b-c1 complex) that is part of the mitochondrial respiratory chain. The b-c1 complex mediates electron transfer from ubiquinol to cytochrome c. Contributes to the generation of a proton gradient across the mitochondrial membrane that is then used for ATP synthesis. The sequence is that of Cytochrome b (COB) from Candida parapsilosis (Yeast).